The sequence spans 238 residues: uncharacterized protein (238 aa).

Disordered regions lie at residues 1–51 (MPCT…ASCA) and 214–238 (ITVE…FPTA). Low complexity predominate over residues 16-31 (ATWRTARPAPRRCGSC).

This is an uncharacterized protein from Streptomyces griseus.